A 140-amino-acid polypeptide reads, in one-letter code: Hemoglobin subunit alpha-D (140 aa).

The Globin domain occupies 1–140 (MLTDSDKKLV…VCTVLAEKYR (140 aa)). Heme b-binding residues include histidine 57 and histidine 86.

This sequence belongs to the globin family. Heterotetramer of two alpha-D chains and two beta chains. In terms of tissue distribution, red blood cells.

Its function is as follows. Involved in oxygen transport from the lung to the various peripheral tissues. The sequence is that of Hemoglobin subunit alpha-D (HBAD) from Columba livia (Rock dove).